Consider the following 329-residue polypeptide: Protein RecA (329 aa).

Residue 63–70 participates in ATP binding; it reads GNESSGKT.

The protein belongs to the RecA family.

The protein localises to the cytoplasm. In terms of biological role, can catalyze the hydrolysis of ATP in the presence of single-stranded DNA, the ATP-dependent uptake of single-stranded DNA by duplex DNA, and the ATP-dependent hybridization of homologous single-stranded DNAs. It interacts with LexA causing its activation and leading to its autocatalytic cleavage. The polypeptide is Protein RecA (Malacoplasma penetrans (strain HF-2) (Mycoplasma penetrans)).